The primary structure comprises 383 residues: tRNA-specific 2-thiouridylase MnmA (383 aa).

Residues 30–37 (GMSGGVDS) and M56 each bind ATP. An interaction with target base in tRNA region spans residues 116-118 (NPD). The Nucleophile role is filled by C121. C121 and C218 form a disulfide bridge. G146 is a binding site for ATP. The tract at residues 168-170 (KDQ) is interaction with tRNA. Catalysis depends on C218, which acts as the Cysteine persulfide intermediate. Positions 330–331 (RY) are interaction with tRNA.

The protein belongs to the MnmA/TRMU family.

The protein localises to the cytoplasm. The catalysed reaction is S-sulfanyl-L-cysteinyl-[protein] + uridine(34) in tRNA + AH2 + ATP = 2-thiouridine(34) in tRNA + L-cysteinyl-[protein] + A + AMP + diphosphate + H(+). In terms of biological role, catalyzes the 2-thiolation of uridine at the wobble position (U34) of tRNA, leading to the formation of s(2)U34. In Haemophilus influenzae (strain 86-028NP), this protein is tRNA-specific 2-thiouridylase MnmA.